A 514-amino-acid polypeptide reads, in one-letter code: Type-2 serine--tRNA ligase (514 aa).

Alanine 313 contacts L-serine. Cysteine 315 provides a ligand contact to Zn(2+). Arginine 344 lines the L-serine pocket. ATP contacts are provided by residues 344–346 (RWE) and 355–356 (RV). 361 to 363 (RGE) is a binding site for L-serine. Residues glutamate 363 and cysteine 470 each coordinate Zn(2+). Arginine 477 is a binding site for ATP.

It belongs to the class-II aminoacyl-tRNA synthetase family. Type-2 seryl-tRNA synthetase subfamily. As to quaternary structure, homodimer. Zn(2+) is required as a cofactor.

It is found in the cytoplasm. The catalysed reaction is tRNA(Ser) + L-serine + ATP = L-seryl-tRNA(Ser) + AMP + diphosphate + H(+). It catalyses the reaction tRNA(Sec) + L-serine + ATP = L-seryl-tRNA(Sec) + AMP + diphosphate + H(+). It functions in the pathway aminoacyl-tRNA biosynthesis; selenocysteinyl-tRNA(Sec) biosynthesis; L-seryl-tRNA(Sec) from L-serine and tRNA(Sec): step 1/1. Catalyzes the attachment of serine to tRNA(Ser). Is also able to aminoacylate tRNA(Sec) with serine, to form the misacylated tRNA L-seryl-tRNA(Sec), which will be further converted into selenocysteinyl-tRNA(Sec). The chain is Type-2 serine--tRNA ligase from Methanococcus maripaludis (strain C6 / ATCC BAA-1332).